The sequence spans 163 residues: Putative defense protein 3 (163 aa).

A signal peptide spans 1–18 (MMFAYIVAVVSALALTSA). Residues 19-163 (YPTGAPSSTC…SAPVTVLSHK (145 aa)) form the Reelin domain. The cysteines at positions 28 and 103 are disulfide-linked.

It belongs to the insect defense protein family.

Its subcellular location is the secreted. In terms of biological role, may have antimicrobial activity. This chain is Putative defense protein 3, found in Antheraea mylitta (Tasar silkworm).